We begin with the raw amino-acid sequence, 325 residues long: Elongation factor P--(R)-beta-lysine ligase (325 aa).

Ser-76–Glu-78 is a binding site for substrate. Residues Arg-100 to Glu-102 and Asn-109 each bind ATP. Tyr-118 contacts substrate. Glu-244 to Leu-245 is an ATP binding site. Position 251 (Glu-251) interacts with substrate. Gly-300 provides a ligand contact to ATP.

The protein belongs to the class-II aminoacyl-tRNA synthetase family. EpmA subfamily. Homodimer.

The enzyme catalyses D-beta-lysine + L-lysyl-[protein] + ATP = N(6)-((3R)-3,6-diaminohexanoyl)-L-lysyl-[protein] + AMP + diphosphate + H(+). In terms of biological role, with EpmB is involved in the beta-lysylation step of the post-translational modification of translation elongation factor P (EF-P) on 'Lys-34'. Catalyzes the ATP-dependent activation of (R)-beta-lysine produced by EpmB, forming a lysyl-adenylate, from which the beta-lysyl moiety is then transferred to the epsilon-amino group of EF-P 'Lys-34'. The protein is Elongation factor P--(R)-beta-lysine ligase of Escherichia fergusonii (strain ATCC 35469 / DSM 13698 / CCUG 18766 / IAM 14443 / JCM 21226 / LMG 7866 / NBRC 102419 / NCTC 12128 / CDC 0568-73).